Reading from the N-terminus, the 354-residue chain is UDP-3-O-acylglucosamine N-acyltransferase (354 aa).

Histidine 245 acts as the Proton acceptor in catalysis.

It belongs to the transferase hexapeptide repeat family. LpxD subfamily. Homotrimer.

The enzyme catalyses a UDP-3-O-[(3R)-3-hydroxyacyl]-alpha-D-glucosamine + a (3R)-hydroxyacyl-[ACP] = a UDP-2-N,3-O-bis[(3R)-3-hydroxyacyl]-alpha-D-glucosamine + holo-[ACP] + H(+). Its pathway is bacterial outer membrane biogenesis; LPS lipid A biosynthesis. Its function is as follows. Catalyzes the N-acylation of UDP-3-O-acylglucosamine using 3-hydroxyacyl-ACP as the acyl donor. Is involved in the biosynthesis of lipid A, a phosphorylated glycolipid that anchors the lipopolysaccharide to the outer membrane of the cell. The polypeptide is UDP-3-O-acylglucosamine N-acyltransferase (Anaeromyxobacter dehalogenans (strain 2CP-1 / ATCC BAA-258)).